The chain runs to 104 residues: MVLTKAEISDYLFHKLELSKQNIKDLVEIFFEEVRKSLELGESVKLSGFGNFYLRDKKQRPGRNPKTGEYIPISARRVVVFKPGQKLRSRVESFKDIKKEKDIV.

It belongs to the bacterial histone-like protein family. In terms of assembly, heterodimer of an alpha and a beta chain.

Its function is as follows. This protein is one of the two subunits of integration host factor, a specific DNA-binding protein that functions in genetic recombination as well as in transcriptional and translational control. The chain is Integration host factor subunit alpha from Buchnera aphidicola subsp. Cinara cedri (strain Cc).